A 178-amino-acid chain; its full sequence is ATP-dependent protease subunit HslV (178 aa).

T7 is an active-site residue. The Na(+) site is built by G162, C165, and T168.

It belongs to the peptidase T1B family. HslV subfamily. A double ring-shaped homohexamer of HslV is capped on each side by a ring-shaped HslU homohexamer. The assembly of the HslU/HslV complex is dependent on binding of ATP.

Its subcellular location is the cytoplasm. The enzyme catalyses ATP-dependent cleavage of peptide bonds with broad specificity.. With respect to regulation, allosterically activated by HslU binding. Functionally, protease subunit of a proteasome-like degradation complex believed to be a general protein degrading machinery. The sequence is that of ATP-dependent protease subunit HslV from Cupriavidus taiwanensis (strain DSM 17343 / BCRC 17206 / CCUG 44338 / CIP 107171 / LMG 19424 / R1) (Ralstonia taiwanensis (strain LMG 19424)).